A 74-amino-acid chain; its full sequence is MNRLIILVFAAVFLTLASAEVSEDVNMAKRGVPCRCDSDGPHVRGNTLTGTVWVFGCPSGWHKCQKGSSTCCKQ.

A signal peptide spans 1–19 (MNRLIILVFAAVFLTLASA). The propeptide occupies 20-28 (EVSEDVNMA). 3 cysteine pairs are disulfide-bonded: Cys-34–Cys-71, Cys-36–Cys-64, and Cys-57–Cys-72.

This sequence belongs to the sea anemone sodium channel inhibitory toxin family. Type I subfamily.

It is found in the secreted. Its subcellular location is the nematocyst. Its function is as follows. Binds specifically to voltage-gated sodium channels (Nav), thereby delaying their inactivation during signal transduction. The chain is Delta-stichotoxin-Sgt2a from Stichodactyla gigantea (Giant carpet anemone).